The chain runs to 468 residues: Probable xyloglucan galactosyltransferase GT13 (468 aa).

At 1 to 18 the chain is on the cytoplasmic side; sequence MDKFNPKKEKTVKKRALK. A helical; Signal-anchor for type II membrane protein membrane pass occupies residues 19–35; sequence VLTEISPTPLFSMLFLL. At 36–468 the chain is on the lumenal side; that stretch reads HISQIATYLS…RVSLFKMTRI (433 aa). Residues asparagine 53, asparagine 116, asparagine 153, asparagine 240, and asparagine 412 are each glycosylated (N-linked (GlcNAc...) asparagine).

It belongs to the glycosyltransferase 47 family. Expressed in roots, hypocotyls, cotyledons, leaves, stems, petals and carpels.

It localises to the golgi apparatus membrane. Functionally, functions in xyloglucan synthesis by adding side chains to the xylosylated glucan backbone. Involved in the galactosylation of hemicellulose xyloglucan. This Arabidopsis thaliana (Mouse-ear cress) protein is Probable xyloglucan galactosyltransferase GT13.